The sequence spans 207 residues: Outer-membrane lipoprotein carrier protein (207 aa).

An N-terminal signal peptide occupies residues 1–21 (MRAIRMLLVSALALGTVTAYA).

This sequence belongs to the LolA family. In terms of assembly, monomer.

It is found in the periplasm. Its function is as follows. Participates in the translocation of lipoproteins from the inner membrane to the outer membrane. Only forms a complex with a lipoprotein if the residue after the N-terminal Cys is not an aspartate (The Asp acts as a targeting signal to indicate that the lipoprotein should stay in the inner membrane). The protein is Outer-membrane lipoprotein carrier protein of Pseudomonas putida (strain GB-1).